Here is a 432-residue protein sequence, read N- to C-terminus: Adenylosuccinate synthetase (432 aa).

GTP is bound by residues 13–19 and 41–43; these read GDEGKGK and GHT. The Proton acceptor role is filled by Asp14. Asp14 and Gly41 together coordinate Mg(2+). Residues 14-17, 39-42, Thr130, Arg144, Gln225, Thr240, and Arg304 contribute to the IMP site; these read DEGK and NAGH. His42 functions as the Proton donor in the catalytic mechanism. 300–306 lines the substrate pocket; the sequence is ATTGRSR. GTP contacts are provided by residues Arg306, 332-334, and 415-417; these read KLD and STG.

This sequence belongs to the adenylosuccinate synthetase family. As to quaternary structure, homodimer. It depends on Mg(2+) as a cofactor.

The protein resides in the cytoplasm. It carries out the reaction IMP + L-aspartate + GTP = N(6)-(1,2-dicarboxyethyl)-AMP + GDP + phosphate + 2 H(+). It functions in the pathway purine metabolism; AMP biosynthesis via de novo pathway; AMP from IMP: step 1/2. Plays an important role in the de novo pathway of purine nucleotide biosynthesis. Catalyzes the first committed step in the biosynthesis of AMP from IMP. This is Adenylosuccinate synthetase from Proteus mirabilis (strain HI4320).